The chain runs to 229 residues: Uracil-DNA glycosylase (229 aa).

The active-site Proton acceptor is the Asp-64.

Belongs to the uracil-DNA glycosylase (UDG) superfamily. UNG family.

Its subcellular location is the cytoplasm. It carries out the reaction Hydrolyzes single-stranded DNA or mismatched double-stranded DNA and polynucleotides, releasing free uracil.. Its function is as follows. Excises uracil residues from the DNA which can arise as a result of misincorporation of dUMP residues by DNA polymerase or due to deamination of cytosine. This chain is Uracil-DNA glycosylase, found in Geobacillus thermodenitrificans (strain NG80-2).